We begin with the raw amino-acid sequence, 372 residues long: NAD(P)H-quinone oxidoreductase subunit 1 (372 aa).

Transmembrane regions (helical) follow at residues 27–47 (AVWM…GVLI), 97–117 (ALFT…YLIV), 128–148 (LGIG…GLLM), 166–186 (AAQS…IAMM), 204–224 (ILGW…IAAL), 254–274 (FALF…MVAI), 308–328 (AVGI…AILL), and 351–371 (VGLV…IAFG).

It belongs to the complex I subunit 1 family. As to quaternary structure, NDH-1 is composed of at least 11 different subunits.

Its subcellular location is the cellular thylakoid membrane. It catalyses the reaction a plastoquinone + NADH + (n+1) H(+)(in) = a plastoquinol + NAD(+) + n H(+)(out). The enzyme catalyses a plastoquinone + NADPH + (n+1) H(+)(in) = a plastoquinol + NADP(+) + n H(+)(out). In terms of biological role, NDH-1 shuttles electrons from an unknown electron donor, via FMN and iron-sulfur (Fe-S) centers, to quinones in the respiratory and/or the photosynthetic chain. The immediate electron acceptor for the enzyme in this species is believed to be plastoquinone. Couples the redox reaction to proton translocation, and thus conserves the redox energy in a proton gradient. The protein is NAD(P)H-quinone oxidoreductase subunit 1 of Cyanothece sp. (strain PCC 7425 / ATCC 29141).